A 140-amino-acid chain; its full sequence is Pro-Viral epidermal growth factor (140 aa).

The first 18 residues, 1-18 (MSMKYLMLLFAAMIIRSF), serve as a signal peptide directing secretion. At 19–100 (ADSGNAIETT…SENPNTTTSY (82 aa)) the chain is on the extracellular side. N-linked (GlcNAc...) asparagine; by host glycosylation is present at N34. The EGF-like domain maps to 41 to 81 (AIRLCGPEGDGYCLHGDCIHARDIDGMYCRCSHGYTGIRCQ). Intrachain disulfides connect C45–C58, C53–C69, and C71–C80. N95 carries N-linked (GlcNAc...) asparagine; by host glycosylation. Residues 101–121 (IPSPGIMLVLVGIIIITCCLL) traverse the membrane as a helical segment. The Cytoplasmic portion of the chain corresponds to 122-140 (SVYRFTRRTKLPIQDMVVP).

The protein belongs to the orthopoxvirus OPG019 family. In terms of assembly, viral epidermal growth factor interacts with host EGFR and promotes EGFR dimerization. Post-translationally, cleaved at the cell surface by host ADAM10, thereby releasing the secreted form of VGF.

It localises to the host membrane. The protein localises to the secreted. Its function is as follows. Stimulates cellular proliferation (hyperplasia)and mobility around infected cells to promote rapid and efficient spread of infection. This effect is beneficial for virus replication in vivo, because poxviruses replicate possibly better in proliferating cells than in quiescent cells. Acts by binding host EGFR, inducing its dimerization, autophosphorylation and leading to activation of several cellular pathways regulating cell proliferation or cell survival. The activation by host EGFR of mitogen activated protein kinases (MAPK) and extracellular-signal regulated kinases (ERK) are essential for the positive effect of vaccinia growth factor on poxvirus virulence in vivo. The polypeptide is Pro-Viral epidermal growth factor (OPG019) (Bos taurus (Bovine)).